The chain runs to 51 residues: Ribosome biogenesis protein Nop10 (51 aa).

The protein belongs to the NOP10 family.

Involved in ribosome biogenesis; more specifically in 18S rRNA pseudouridylation and in cleavage of pre-rRNA. This is Ribosome biogenesis protein Nop10 from Methanococcus maripaludis (strain C7 / ATCC BAA-1331).